Reading from the N-terminus, the 20-residue chain is Thylakoid lumenal 18.4 kDa protein (20 aa).

It localises to the plastid. It is found in the chloroplast thylakoid lumen. The polypeptide is Thylakoid lumenal 18.4 kDa protein (Spinacia oleracea (Spinach)).